The sequence spans 161 residues: MPSMDIVSEVDEVELRNAVDNSVRELKSRFDFRGKDASIEYKDHVVTLSAEDDFQCQQLVDILRMQLSKRNVDPASMDVDDKSVHSGKTFSLKVRFKEGIEVLTAKKLVKIIKDSKLKVQSSIQGDSVRVTGKKRDDLQAVMTLARESGLDQPFQFNNFRD.

Belongs to the YajQ family.

Functionally, nucleotide-binding protein. In Shewanella woodyi (strain ATCC 51908 / MS32), this protein is Nucleotide-binding protein Swoo_3646.